We begin with the raw amino-acid sequence, 334 residues long: ADP-L-glycero-D-manno-heptose-6-epimerase (334 aa).

NADP(+)-binding positions include 11–12 (FI), 32–33 (DN), lysine 39, lysine 54, 77–81 (QGACS), and asparagine 94. Tyrosine 141 (proton acceptor) is an active-site residue. Lysine 145 serves as a coordination point for NADP(+). Asparagine 171 is a binding site for substrate. Positions 172 and 180 each coordinate NADP(+). The Proton acceptor role is filled by lysine 180. Residues arginine 182, histidine 189, 203 to 206 (FGSN), arginine 216, and tyrosine 295 contribute to the substrate site.

It belongs to the NAD(P)-dependent epimerase/dehydratase family. HldD subfamily. Homopentamer. It depends on NADP(+) as a cofactor.

The enzyme catalyses ADP-D-glycero-beta-D-manno-heptose = ADP-L-glycero-beta-D-manno-heptose. Its pathway is nucleotide-sugar biosynthesis; ADP-L-glycero-beta-D-manno-heptose biosynthesis; ADP-L-glycero-beta-D-manno-heptose from D-glycero-beta-D-manno-heptose 7-phosphate: step 4/4. Catalyzes the interconversion between ADP-D-glycero-beta-D-manno-heptose and ADP-L-glycero-beta-D-manno-heptose via an epimerization at carbon 6 of the heptose. This Neisseria meningitidis serogroup C / serotype 2a (strain ATCC 700532 / DSM 15464 / FAM18) protein is ADP-L-glycero-D-manno-heptose-6-epimerase.